The sequence spans 355 residues: UDP-3-O-acylglucosamine N-acyltransferase (355 aa).

Residue His258 is the Proton acceptor of the active site.

Belongs to the transferase hexapeptide repeat family. LpxD subfamily. In terms of assembly, homotrimer.

It catalyses the reaction a UDP-3-O-[(3R)-3-hydroxyacyl]-alpha-D-glucosamine + a (3R)-hydroxyacyl-[ACP] = a UDP-2-N,3-O-bis[(3R)-3-hydroxyacyl]-alpha-D-glucosamine + holo-[ACP] + H(+). Its pathway is bacterial outer membrane biogenesis; LPS lipid A biosynthesis. Functionally, catalyzes the N-acylation of UDP-3-O-acylglucosamine using 3-hydroxyacyl-ACP as the acyl donor. Is involved in the biosynthesis of lipid A, a phosphorylated glycolipid that anchors the lipopolysaccharide to the outer membrane of the cell. The polypeptide is UDP-3-O-acylglucosamine N-acyltransferase (Bradyrhizobium sp. (strain BTAi1 / ATCC BAA-1182)).